Here is a 137-residue protein sequence, read N- to C-terminus: Small ribosomal subunit protein uS12 (137 aa).

The segment at 1 to 44 (MPTINQLVRKGRKSRTSKSDAPALNFGYNSMKKKATDNPAPQKR) is disordered. D102 carries the 3-methylthioaspartic acid modification.

Belongs to the universal ribosomal protein uS12 family. As to quaternary structure, part of the 30S ribosomal subunit. Contacts proteins S8 and S17. May interact with IF1 in the 30S initiation complex.

In terms of biological role, with S4 and S5 plays an important role in translational accuracy. Interacts with and stabilizes bases of the 16S rRNA that are involved in tRNA selection in the A site and with the mRNA backbone. Located at the interface of the 30S and 50S subunits, it traverses the body of the 30S subunit contacting proteins on the other side and probably holding the rRNA structure together. The combined cluster of proteins S8, S12 and S17 appears to hold together the shoulder and platform of the 30S subunit. The chain is Small ribosomal subunit protein uS12 from Latilactobacillus sakei subsp. sakei (strain 23K) (Lactobacillus sakei subsp. sakei).